A 309-amino-acid polypeptide reads, in one-letter code: Porphobilinogen deaminase (309 aa).

Position 244 is an S-(dipyrrolylmethanemethyl)cysteine (Cys244).

The protein belongs to the HMBS family. Monomer. The cofactor is dipyrromethane.

The catalysed reaction is 4 porphobilinogen + H2O = hydroxymethylbilane + 4 NH4(+). Its pathway is porphyrin-containing compound metabolism; protoporphyrin-IX biosynthesis; coproporphyrinogen-III from 5-aminolevulinate: step 2/4. In terms of biological role, tetrapolymerization of the monopyrrole PBG into the hydroxymethylbilane pre-uroporphyrinogen in several discrete steps. This chain is Porphobilinogen deaminase, found in Rhizobium meliloti (strain 1021) (Ensifer meliloti).